The chain runs to 731 residues: Nucleolar GTP-binding protein 2 (731 aa).

The residue at position 1 (M1) is an N-acetylmethionine. Residues 1–33 form a disordered region; the sequence is MVKPKYKGRSTINPSKASTNPDRVQGAGGQNMR. Residues 10–22 are compositionally biased toward polar residues; sequence STINPSKASTNPD. The region spanning 207–368 is the CP-type G domain; sequence WGELYKVIDS…LIDCPGVVYP (162 aa). GTP-binding positions include 317–324 and 361–365; these read GYPNVGKS and DCPGV. Positions 481–502 are disordered; that stretch reads VVPEAAQNNPGEEVTETAGEGS. Position 504 is a phosphoserine (S504). The span at 555–589 shows a compositional bias: acidic residues; that stretch reads LEEELESFSDEEEEEQEQQRDDAEESSSEPEEENV. Disordered regions lie at residues 555 to 594 and 630 to 731; these read LEEELESFSDEEEEEQEQQRDDAEESSSEPEEENVGNDTK and EKIF…RQKQ. Composition is skewed to basic and acidic residues over residues 630-652 and 662-671; these read EKIFAKPEEQRKTLEEDVDDRAP and QREEEQEHSN. Basic residues-rich tracts occupy residues 681–695 and 721–731; these read ERRRAVRQQRPKKVG and KHKRKKFRQKQ.

It belongs to the TRAFAC class YlqF/YawG GTPase family. NOG2 subfamily. Interacts with LYAR and RPL23A. Interacts with the nuclear importin-beta receptor and, at a lower extent, with importin-alpha. As to expression, widely expressed, with the highest expression level in testis.

Its subcellular location is the nucleus. The protein resides in the nucleolus. Its function is as follows. GTPase that associates with pre-60S ribosomal subunits in the nucleolus and is required for their nuclear export and maturation. May promote cell proliferation possibly by increasing p53/TP53 protein levels, and consequently those of its downstream product CDKN1A/p21, and decreasing RPL23A protein levels. In Homo sapiens (Human), this protein is Nucleolar GTP-binding protein 2 (GNL2).